A 426-amino-acid polypeptide reads, in one-letter code: Histidine--tRNA ligase (426 aa).

This sequence belongs to the class-II aminoacyl-tRNA synthetase family.

Its subcellular location is the cytoplasm. The enzyme catalyses tRNA(His) + L-histidine + ATP = L-histidyl-tRNA(His) + AMP + diphosphate + H(+). This is Histidine--tRNA ligase from Saccharolobus islandicus (strain L.S.2.15 / Lassen #1) (Sulfolobus islandicus).